A 153-amino-acid polypeptide reads, in one-letter code: Nucleoside diphosphate kinase (153 aa).

ATP is bound by residues Lys-11, Phe-59, Arg-87, Thr-93, Arg-104, and Asn-114. Residue His-117 is the Pros-phosphohistidine intermediate of the active site.

The protein belongs to the NDK family. It depends on Mg(2+) as a cofactor.

It carries out the reaction a 2'-deoxyribonucleoside 5'-diphosphate + ATP = a 2'-deoxyribonucleoside 5'-triphosphate + ADP. The enzyme catalyses a ribonucleoside 5'-diphosphate + ATP = a ribonucleoside 5'-triphosphate + ADP. Functionally, major role in the synthesis of nucleoside triphosphates other than ATP. The ATP gamma phosphate is transferred to the NDP beta phosphate via a ping-pong mechanism, using a phosphorylated active-site intermediate. This chain is Nucleoside diphosphate kinase (swoH), found in Emericella nidulans (strain FGSC A4 / ATCC 38163 / CBS 112.46 / NRRL 194 / M139) (Aspergillus nidulans).